The primary structure comprises 300 residues: 1D-myo-inositol 2-acetamido-2-deoxy-alpha-D-glucopyranoside deacetylase (300 aa).

The Zn(2+) site is built by histidine 13, aspartate 16, and histidine 147.

It belongs to the MshB deacetylase family. Zn(2+) serves as cofactor.

It carries out the reaction 1D-myo-inositol 2-acetamido-2-deoxy-alpha-D-glucopyranoside + H2O = 1D-myo-inositol 2-amino-2-deoxy-alpha-D-glucopyranoside + acetate. Catalyzes the deacetylation of 1D-myo-inositol 2-acetamido-2-deoxy-alpha-D-glucopyranoside (GlcNAc-Ins) in the mycothiol biosynthesis pathway. The polypeptide is 1D-myo-inositol 2-acetamido-2-deoxy-alpha-D-glucopyranoside deacetylase (Mycolicibacterium paratuberculosis (strain ATCC BAA-968 / K-10) (Mycobacterium paratuberculosis)).